A 351-amino-acid polypeptide reads, in one-letter code: Soluble interferon alpha/beta receptor OPG204 (351 aa).

The signal sequence occupies residues 1–23 (MKMKMMVRIYFVSLSLLLFHSYA). Ig-like C2-type domains are found at residues 65–137 (LGEP…KNGD) and 155–237 (PKTY…IVVS). Intrachain disulfides connect C73/C129 and C172/C221. N-linked (GlcNAc...) asparagine; by host glycans are attached at residues N117, N182, N261, N269, and N321. The Ig-like V-type domain occupies 246 to 345 (PSQDHRFKLI…HNYYFDKTLT (100 aa)). Residues C272 and C333 are joined by a disulfide bond.

This sequence belongs to the interleukin-1 receptor family. In terms of assembly, interacts with host IFNA1.

The protein localises to the secreted. In terms of biological role, counteracts the antiviral effects of host IFN-alpha/beta and key IFN-inducible proteins involved in viral RNA degradation suxh as host OAS1. Acts as a soluble IFN-alpha receptor and thus inhibits the interaction between host IFN-alpha and its receptor. The protein is Soluble interferon alpha/beta receptor OPG204 (OPG204) of Cynomys gunnisoni (Gunnison's prairie dog).